We begin with the raw amino-acid sequence, 412 residues long: Serine hydroxymethyltransferase (412 aa).

Residues leucine 117 and 121–123 contribute to the (6S)-5,6,7,8-tetrahydrofolate site; that span reads GHL. Residue lysine 226 is modified to N6-(pyridoxal phosphate)lysine. 349-351 serves as a coordination point for (6S)-5,6,7,8-tetrahydrofolate; sequence SPF.

The protein belongs to the SHMT family. In terms of assembly, homodimer. It depends on pyridoxal 5'-phosphate as a cofactor.

The protein localises to the cytoplasm. It catalyses the reaction (6R)-5,10-methylene-5,6,7,8-tetrahydrofolate + glycine + H2O = (6S)-5,6,7,8-tetrahydrofolate + L-serine. The protein operates within one-carbon metabolism; tetrahydrofolate interconversion. Its pathway is amino-acid biosynthesis; glycine biosynthesis; glycine from L-serine: step 1/1. Catalyzes the reversible interconversion of serine and glycine with tetrahydrofolate (THF) serving as the one-carbon carrier. This reaction serves as the major source of one-carbon groups required for the biosynthesis of purines, thymidylate, methionine, and other important biomolecules. Also exhibits THF-independent aldolase activity toward beta-hydroxyamino acids, producing glycine and aldehydes, via a retro-aldol mechanism. The polypeptide is Serine hydroxymethyltransferase (Oleidesulfovibrio alaskensis (strain ATCC BAA-1058 / DSM 17464 / G20) (Desulfovibrio alaskensis)).